The following is a 144-amino-acid chain: Protein cornichon homolog 1 (144 aa).

Over 1-10 the chain is Cytoplasmic; it reads MAFTFAAFCY. Residues 11–31 traverse the membrane as a helical segment; that stretch reads MLALLLTATLIFFAIWHIIAF. Residues 32 to 56 are Lumenal-facing; sequence DELKTDYKNPIDQCNTLNPLVLPEY. Residues 57-77 traverse the membrane as a helical segment; that stretch reads LIHAFFCVMFLCAAEWLTLGL. Over 78-122 the chain is Cytoplasmic; sequence NMPLLAYHIWRYMSRPVMSGPGLYDPTTIMNADILAYCQKEGWCK. Residues 123–143 traverse the membrane as a helical segment; sequence LAFYLLAFFYYLYGMIYVLVS. A topological domain (lumenal) is located at residue S144.

The protein belongs to the cornichon family. Interacts with AREG immature precursor and with immature TGFA, i.e. with a prosegment and lacking full N-glycosylation, but not with the fully N-glycosylated form. In the Golgi apparatus, may form a complex with GORASP55 and transmembrane TGFA.

Its subcellular location is the endoplasmic reticulum membrane. The protein localises to the golgi apparatus membrane. In terms of biological role, involved in the selective transport and maturation of TGF-alpha family proteins. The polypeptide is Protein cornichon homolog 1 (CNIH1) (Pongo abelii (Sumatran orangutan)).